A 671-amino-acid chain; its full sequence is Kinesin-like protein KIF2C (671 aa).

Positions 1–200 (MIDFDDVAAI…CHPLTMTDPI (200 aa)) are globular. Positions 36-62 (KQKRRSVNSKIPAPKESLRTRSTRMST) are disordered. Ser-41 is modified (phosphoserine; by AURKB). The Microtubule tip localization signal motif lies at 44–47 (SKIP). Phosphoserine is present on residues Ser-52, Ser-57, Ser-61, Ser-112, Ser-121, Ser-133, and Ser-138. The interval 153–184 (EKKAQNSEMRMKRAQEYDSSFPNWEFARMIKE) is negative regulator of microtubule-binding. 2 disulfides stabilise this stretch: Cys-191-Cys-233 and Cys-290-Cys-506. Residues 204 to 534 (RICVCVRKRP…LRYADRVKEL (331 aa)) form the Kinesin motor domain. 294–301 (GQTGSGKT) serves as a coordination point for ATP. Residues Ser-465, Ser-567, and Ser-579 each carry the phosphoserine modification. The stretch at 564 to 604 (GNLSKEEEELSSQMSSFNEAMTQIRELEERAVEELKEIIQQ) forms a coiled coil.

It belongs to the TRAFAC class myosin-kinesin ATPase superfamily. Kinesin family. MCAK/KIF2 subfamily. Interacts with CENPH. Interacts with MTUS2/TIP150; the interaction is direct. Interacts with MAPRE1; the interaction is direct, regulated by phosphorylation and is probably required for targeting to growing microtubule plus ends. Interacts with KIF18B at microtubule tips; this interaction increases the affinity of both partners for microtubule plus ends and is required for robust microtubule depolymerization. Phosphorylation by AURKA or AURKB strongly reduces KIF18B-binding. Phosphorylation by AURKB, regulates association with centromeres and kinetochores and the microtubule depolymerization activity. In terms of processing, ubiquitinated.

The protein resides in the cytoplasm. It localises to the cytoskeleton. It is found in the nucleus. Its subcellular location is the chromosome. The protein localises to the centromere. The protein resides in the kinetochore. In complex with KIF18B, constitutes the major microtubule plus-end depolymerizing activity in mitotic cells. Regulates the turnover of microtubules at the kinetochore and functions in chromosome segregation during mitosis. Plays a role in chromosome congression and is required for the lateral to end-on conversion of the chromosome-microtubule attachment. The protein is Kinesin-like protein KIF2C (KIF2C) of Macaca fascicularis (Crab-eating macaque).